The primary structure comprises 545 residues: Protein disulfide isomerase-like 1-3 (545 aa).

A compositionally biased stretch (pro residues) spans 1 to 16 (MWPRAPATPPPPPWPS). The disordered stretch occupies residues 1–24 (MWPRAPATPPPPPWPSKPSAASRS). A Thioredoxin 1 domain is found at 55–189 (ASSTAFAAAF…IVAYLKRQAG (135 aa)). N-linked (GlcNAc...) asparagine glycosylation occurs at Asn-87. Residues Cys-107 and Cys-110 each act as nucleophile in the active site. Cys-107 and Cys-110 form a disulfide bridge. An N-linked (GlcNAc...) asparagine glycan is attached at Asn-349. The 143-residue stretch at 403-545 (FTEGTLAPHV…TTTESVKDEL (143 aa)) folds into the Thioredoxin 2 domain. Residues Cys-453 and Cys-456 each act as nucleophile in the active site. A disulfide bridge links Cys-453 with Cys-456. Residues 542–545 (KDEL) carry the Prevents secretion from ER motif.

Belongs to the protein disulfide isomerase family.

Its subcellular location is the endoplasmic reticulum lumen. It carries out the reaction Catalyzes the rearrangement of -S-S- bonds in proteins.. Acts as a protein-folding catalyst that interacts with nascent polypeptides to catalyze the formation, isomerization, and reduction or oxidation of disulfide bonds. May play a role in storage protein biogenesis. This chain is Protein disulfide isomerase-like 1-3 (PDIL1-3), found in Oryza sativa subsp. japonica (Rice).